Reading from the N-terminus, the 488-residue chain is BRAP2 RING ZnF UBP domain-containing protein 1 (488 aa).

The RING-type; degenerate zinc-finger motif lies at C174–R214. The UBP-type; degenerate zinc-finger motif lies at L208–C301. Zn(2+)-binding residues include C225, C228, C237, C240, C245, H252, H256, and H262. Residues E370–R418 are a coiled coil. The interval M453–K488 is disordered. Low complexity predominate over residues V465–V478. Over residues R479 to K488 the composition is skewed to basic residues.

Component of the heteromeric E3 ligase complex made of BRIZ1 and BRIZ2. Forms heterooligomers with BRIZ2 via coiled-coil domains.

It carries out the reaction S-ubiquitinyl-[E2 ubiquitin-conjugating enzyme]-L-cysteine + [acceptor protein]-L-lysine = [E2 ubiquitin-conjugating enzyme]-L-cysteine + N(6)-ubiquitinyl-[acceptor protein]-L-lysine.. Its pathway is protein modification; protein ubiquitination. Its function is as follows. RING-type ubiquitin E3 ligase required for seed germination and post-germination growth. The chain is BRAP2 RING ZnF UBP domain-containing protein 1 from Arabidopsis thaliana (Mouse-ear cress).